A 215-amino-acid polypeptide reads, in one-letter code: UPF0502 protein PputGB1_3531 (215 aa).

It belongs to the UPF0502 family.

This chain is UPF0502 protein PputGB1_3531, found in Pseudomonas putida (strain GB-1).